We begin with the raw amino-acid sequence, 916 residues long: MSKKRLYEIAKEIGKESKEIVEKAKSLGLEVKSHASSVEESDAKRIVESFTVSVEPKAVTPTSKVEKEAKAQEGSVAAEPKAAATKPAGRPRPQNRNFKAEREARAKAEAERRQNNGERRNQNKGQNNRQKDNRNHGSQDRRNDNRNNRNRQNDNRRDNRNHFQNRQEASKSQPTGPRFDFKARAAALKAEQNAEYSRQSETRFHEAQEAKRQAAQAKEKAKKLNQKEQPTVEAAATAAPQAQPQTVEQVTHPAAVDTRRKKQARPDKSRDFSHENEDGPKQNKHKKNRNKQNQVRNQKNSNWNKKNKKSKNNRNHNANLKPVTERKFHELPKEFEYTEGMTVAEIAKRIKREPAEIVKKLFMMGVMATQNQSLDADTIELLMVDYGIEAHQKVEVDTADIERFFVEDDYLNPKNMVERAPVVTIMGHVDHGKTTLLDTLRNSRIATGEAGGITQHIGAYQIEEGGKKITFLDTPGHAAFTSMRARGASVTDITILIVAADDGVMPQTIEAINHSKAADVPIIVAINKIDKPGANPERVIGELAEYGVISTAWGGDSEFVEISAKFGQNIEELLETVLLVAEIQELKADPTVRAIGTVIEARLDKGKGAVATLLVQQGTLHVQDPIVVGNTFGRVRAMTNDLGRRVKVAAPSTPVSITGLNEAPMAGDHFAVYEDEKAARAAGEERAKRALLKQRQLTHRVSLDNLFDTLKAGEVKSVNVIIKADVQGSVEALAASLLKIDVEGVKVNVVHSAVGAINESDITLAEASNAVIIGFNVRPTPQARQQAEADEVEIRLHSIIYKVIEEVEDAMKGMLDPEFEEKIIGEALIRETFKVSKVGTIGGFMVTNGKITRDSSARVIRDGVVVFDGKLASLKHYKDDVKEVGNGQEGGLMIENYNDIKIDDTIEAYIMEEIKR.

The disordered stretch occupies residues 55-324; the sequence is EPKAVTPTSK…NHNANLKPVT (270 aa). Residues 77–88 are compositionally biased toward low complexity; sequence AAEPKAAATKPA. 3 stretches are compositionally biased toward basic and acidic residues: residues 98–121, 129–161, and 198–212; these read FKAE…ERRN, RQKD…DNRN, and RQSE…EAKR. Residues 227-250 show a composition bias toward low complexity; sequence KEQPTVEAAATAAPQAQPQTVEQV. Residues 264 to 281 show a composition bias toward basic and acidic residues; the sequence is ARPDKSRDFSHENEDGPK. A compositionally biased stretch (low complexity) spans 291 to 304; sequence KQNQVRNQKNSNWN. Positions 305-314 are enriched in basic residues; the sequence is KKNKKSKNNR. One can recognise a tr-type G domain in the interval 418 to 585; the sequence is ERAPVVTIMG…TVLLVAEIQE (168 aa). The G1 stretch occupies residues 427–434; it reads GHVDHGKT. GTP is bound at residue 427–434; the sequence is GHVDHGKT. Residues 452 to 456 form a G2 region; it reads GITQH. Positions 473–476 are G3; it reads DTPG. Residues 473–477 and 527–530 each bind GTP; these read DTPGH and NKID. The G4 stretch occupies residues 527 to 530; the sequence is NKID. The G5 stretch occupies residues 563 to 565; it reads SAK.

It belongs to the TRAFAC class translation factor GTPase superfamily. Classic translation factor GTPase family. IF-2 subfamily.

It is found in the cytoplasm. One of the essential components for the initiation of protein synthesis. Protects formylmethionyl-tRNA from spontaneous hydrolysis and promotes its binding to the 30S ribosomal subunits. Also involved in the hydrolysis of GTP during the formation of the 70S ribosomal complex. The sequence is that of Translation initiation factor IF-2 from Streptococcus mutans serotype c (strain ATCC 700610 / UA159).